The primary structure comprises 271 residues: MLLSSPTTPSRGRTPSAVERLEADKAKYVKTHQVIVRRQEPALRGGPGPLTPHPCNELGASASPRTPGPARRGSGRRQPRPDSLIFYRQKRDCKASVNKENAKGQGLVRRLFLGATRDAAPSSPAPTERPGAPAGWAGSPDTPEATGKRAVCPTCSLPLSEKERFFNYCGLERALVEVLGAERFSPQSWGAEHGPQVATSPPPGSGDTSDWTSSDRDAGSPDCAGGGGGSEAAGSARDGRPTVSVVERNARVIQWLYGCQRARAPPRESEV.

Residues 1–13 are compositionally biased toward polar residues; the sequence is MLLSSPTTPSRGR. Disordered stretches follow at residues 1–84, 118–149, and 186–242; these read MLLS…PDSL, DAAPSSPAPTERPGAPAGWAGSPDTPEATGKR, and PQSW…GRPT.

Belongs to the FAM110 family.

In Mus musculus (Mouse), this protein is Protein FAM110D.